The sequence spans 326 residues: Olfactory receptor 11H1 (326 aa).

Over M1–S44 the chain is Extracellular. 2 N-linked (GlcNAc...) asparagine glycosylation sites follow: N13 and N18. Residues L45–W65 form a helical membrane-spanning segment. Residues C66–T72 are Cytoplasmic-facing. Residues P73–V93 traverse the membrane as a helical segment. At P94 to C112 the chain is on the extracellular side. N106 carries N-linked (GlcNAc...) asparagine glycosylation. C112 and C194 form a disulfide bridge. The chain crosses the membrane as a helical span at residues F113–M133. Residues A134 to K158 lie on the Cytoplasmic side of the membrane. A helical membrane pass occupies residues L159–S179. Over Q180–T216 the chain is Extracellular. Residues L217 to L237 form a helical membrane-spanning segment. Residues K238–H259 lie on the Cytoplasmic side of the membrane. A helical membrane pass occupies residues L260 to G280. Topologically, residues H281 to K287 are extracellular. The helical transmembrane segment at I288–Q308 threads the bilayer. Topologically, residues N309 to I326 are cytoplasmic.

Belongs to the G-protein coupled receptor 1 family.

It is found in the cell membrane. Its function is as follows. Odorant receptor. This Homo sapiens (Human) protein is Olfactory receptor 11H1 (OR11H1).